The primary structure comprises 80 residues: Small ribosomal subunit protein bS18 (80 aa).

Belongs to the bacterial ribosomal protein bS18 family. In terms of assembly, part of the 30S ribosomal subunit. Forms a tight heterodimer with protein bS6.

Binds as a heterodimer with protein bS6 to the central domain of the 16S rRNA, where it helps stabilize the platform of the 30S subunit. The sequence is that of Small ribosomal subunit protein bS18 from Beijerinckia indica subsp. indica (strain ATCC 9039 / DSM 1715 / NCIMB 8712).